Consider the following 144-residue polypeptide: Large ribosomal subunit protein uL22 (144 aa).

The tract at residues 123–144 (ELVKKRTMGHKKEKAKQKQKQQ) is disordered. Positions 125–144 (VKKRTMGHKKEKAKQKQKQQ) are enriched in basic residues.

The protein belongs to the universal ribosomal protein uL22 family. In terms of assembly, part of the 50S ribosomal subunit.

This protein binds specifically to 23S rRNA; its binding is stimulated by other ribosomal proteins, e.g. L4, L17, and L20. It is important during the early stages of 50S assembly. It makes multiple contacts with different domains of the 23S rRNA in the assembled 50S subunit and ribosome. Its function is as follows. The globular domain of the protein is located near the polypeptide exit tunnel on the outside of the subunit, while an extended beta-hairpin is found that lines the wall of the exit tunnel in the center of the 70S ribosome. In Mycoplasma genitalium (strain ATCC 33530 / DSM 19775 / NCTC 10195 / G37) (Mycoplasmoides genitalium), this protein is Large ribosomal subunit protein uL22.